We begin with the raw amino-acid sequence, 482 residues long: MASNLVEMFNAALNWVTMILESPSARVVLFGVPIRGHFFVEGLLGVVIIILLTRKSYKPPKRPLTEQEIDELCDEWVPEPLIPPITEDMKHEPPVLESAAGPHTTVNGKDVVNFASANYLGLIGHEKLLESCTSALEKYGVGSCGPRGFYGTIDVHLDCETRISKFLGTPDSILYSYGLSTMFSTIPCFCKKGDVIVADEGVHWGIQNGLQLSRSTIVYFKHNDMESLRITLEKIMTKYKRSKNLRRYIVAEAVYQNSGQIAPLDEIVKLKEKYRFRVILDESNSFGVLGRSGRGLAEHHSVPIEKIDVVTAAMGHALATEGGFCTGNARIIDYQRLSSSGYVFSASLPPYLASAAITAIDVIDQNPDMLVKLKQNVALLWKGLSDIKGMSLTSNRESPIVFLKLEKSSGSAKDDLLLLEKMADRALKEDSLLVVSSKRSFLDKCRLPVGIKLYVSAGHSESDLLKASESLKRLASELLLKS.

The helical transmembrane segment at 32–52 (VPIRGHFFVEGLLGVVIIILL) threads the bilayer.

This sequence belongs to the class-II pyridoxal-phosphate-dependent aminotransferase family. As to quaternary structure, heterodimer with LCB2 (LCB2a or LCB2b). Component of the serine palmitoyltransferase (SPT) complex, composed of LCB1 and LCB2 (LCB2a or LCB2b). Pyridoxal 5'-phosphate serves as cofactor. Ubiquitous.

It is found in the endoplasmic reticulum membrane. The enzyme catalyses L-serine + hexadecanoyl-CoA + H(+) = 3-oxosphinganine + CO2 + CoA. It participates in lipid metabolism; sphingolipid metabolism. Functionally, component of serine palmitoyltransferase (SPT), which catalyzes the committed step in the synthesis of sphingolipids, the condensation of serine with palmitoyl CoA to form the long chain base 3-ketosphinganine. The heterodimer formed with LCB2 constitutes the catalytic core. Involved in the regulation of the programmed cell death (PCD) signaling pathway. Plays an important role during male gametogenesis and embryogenesis. The protein is Long chain base biosynthesis protein 1 (LCB1) of Arabidopsis thaliana (Mouse-ear cress).